The chain runs to 273 residues: Orotidine 5'-phosphate decarboxylase (273 aa).

Lys-97 serves as the catalytic Proton donor.

It belongs to the OMP decarboxylase family. Type 2 subfamily.

It catalyses the reaction orotidine 5'-phosphate + H(+) = UMP + CO2. The protein operates within pyrimidine metabolism; UMP biosynthesis via de novo pathway; UMP from orotate: step 2/2. The protein is Orotidine 5'-phosphate decarboxylase of Cellvibrio japonicus (strain Ueda107) (Pseudomonas fluorescens subsp. cellulosa).